The primary structure comprises 625 residues: 1-deoxy-D-xylulose-5-phosphate synthase (625 aa).

Thiamine diphosphate-binding positions include H80 and 121–123; that span reads GHS. D152 provides a ligand contact to Mg(2+). Thiamine diphosphate contacts are provided by residues 153-154, N181, Y288, and E370; that span reads GA. N181 contacts Mg(2+).

This sequence belongs to the transketolase family. DXPS subfamily. In terms of assembly, homodimer. Requires Mg(2+) as cofactor. The cofactor is thiamine diphosphate.

The enzyme catalyses D-glyceraldehyde 3-phosphate + pyruvate + H(+) = 1-deoxy-D-xylulose 5-phosphate + CO2. Its pathway is metabolic intermediate biosynthesis; 1-deoxy-D-xylulose 5-phosphate biosynthesis; 1-deoxy-D-xylulose 5-phosphate from D-glyceraldehyde 3-phosphate and pyruvate: step 1/1. Catalyzes the acyloin condensation reaction between C atoms 2 and 3 of pyruvate and glyceraldehyde 3-phosphate to yield 1-deoxy-D-xylulose-5-phosphate (DXP). The polypeptide is 1-deoxy-D-xylulose-5-phosphate synthase (Alteromonas mediterranea (strain DSM 17117 / CIP 110805 / LMG 28347 / Deep ecotype)).